Reading from the N-terminus, the 180-residue chain is Ribulose bisphosphate carboxylase small subunit, chloroplastic 1 (180 aa).

A chloroplast-targeting transit peptide spans 1 to 56 (MASSVISSAAVATRTNVAQASMVAPFNGLKSAVSFPVSSKQNLDITSIASNGGRVQ).

The protein belongs to the RuBisCO small chain family. As to quaternary structure, heterohexadecamer of 8 large and 8 small subunits.

The protein resides in the plastid. The protein localises to the chloroplast. Functionally, ruBisCO catalyzes two reactions: the carboxylation of D-ribulose 1,5-bisphosphate, the primary event in carbon dioxide fixation, as well as the oxidative fragmentation of the pentose substrate. Both reactions occur simultaneously and in competition at the same active site. Although the small subunit is not catalytic it is essential for maximal activity. This Petunia hybrida (Petunia) protein is Ribulose bisphosphate carboxylase small subunit, chloroplastic 1.